Reading from the N-terminus, the 79-residue chain is RNA-binding protein Hfq (79 aa).

Residues 10 to 70 (DAFLNHVRKT…ISTIMPAQPI (61 aa)) enclose the Sm domain.

It belongs to the Hfq family. In terms of assembly, homohexamer.

RNA chaperone that binds small regulatory RNA (sRNAs) and mRNAs to facilitate mRNA translational regulation in response to envelope stress, environmental stress and changes in metabolite concentrations. Also binds with high specificity to tRNAs. The protein is RNA-binding protein Hfq of Ruegeria pomeroyi (strain ATCC 700808 / DSM 15171 / DSS-3) (Silicibacter pomeroyi).